We begin with the raw amino-acid sequence, 427 residues long: MTAIVDIIGREILDSRGNPTVEVDVVLEDGSVGRAAVPSGASTGAHEAVELRDGDKRRYLGKGVQKAVEAINDEIYEALSDMSVQDQVQIDQILIELDGTENKSRLGANAILGVSLACAKAAAISYDMPLYRYVGGTSARTLPVPMMNIVNGGVHADNPIDFQEFMIMPVGAPSFAEALRCGSEIFHTLKGELKKAGHNTNVGDEGGFAPNLPSADAALDFVMAAIGKAGYTAGEDVMLALDCAATEFFKDGKYVYEGENKSRSRSEQAKYLADLVARYPICSIEDGMSEDDMDGWKELTDLIGHKCQLVGDDLFVTNVTRLEDGIRNGRANSILIKVNQIGTLTETLAAVEMAYKAGYTAVMSHRSGETEDSTIADLAVATNCGQIKTGSLARSDRTAKYNQLLRIEQELDAQAKYAGRAALKALA.

Residue glutamine 163 coordinates (2R)-2-phosphoglycerate. Glutamate 205 serves as the catalytic Proton donor. Mg(2+)-binding residues include aspartate 242, glutamate 285, and aspartate 312. (2R)-2-phosphoglycerate is bound by residues lysine 337, arginine 366, serine 367, and lysine 388. Catalysis depends on lysine 337, which acts as the Proton acceptor.

Belongs to the enolase family. Mg(2+) serves as cofactor.

The protein resides in the cytoplasm. It is found in the secreted. It localises to the cell surface. The catalysed reaction is (2R)-2-phosphoglycerate = phosphoenolpyruvate + H2O. The protein operates within carbohydrate degradation; glycolysis; pyruvate from D-glyceraldehyde 3-phosphate: step 4/5. Catalyzes the reversible conversion of 2-phosphoglycerate (2-PG) into phosphoenolpyruvate (PEP). It is essential for the degradation of carbohydrates via glycolysis. This chain is Enolase, found in Bradyrhizobium sp. (strain ORS 278).